We begin with the raw amino-acid sequence, 229 residues long: AA9 family lytic polysaccharide monooxygenase E (229 aa).

The N-terminal stretch at 1–19 is a signal peptide; sequence MRSSDITFVLLSVVATVRS. His-20 serves as a coordination point for Cu(2+). A disulfide bridge connects residues Cys-57 and Cys-178. A glycan (N-linked (GlcNAc...) asparagine) is linked at Asn-76. A Cu(2+)-binding site is contributed by His-99. The O2 site is built by His-164 and Gln-173. Tyr-175 provides a ligand contact to Cu(2+). Asn-217 carries an N-linked (GlcNAc...) asparagine glycan.

Belongs to the polysaccharide monooxygenase AA9 family. It depends on Cu(2+) as a cofactor.

Its subcellular location is the secreted. The catalysed reaction is [(1-&gt;4)-beta-D-glucosyl]n+m + reduced acceptor + O2 = 4-dehydro-beta-D-glucosyl-[(1-&gt;4)-beta-D-glucosyl]n-1 + [(1-&gt;4)-beta-D-glucosyl]m + acceptor + H2O.. In terms of biological role, lytic polysaccharide monooxygenase (LPMO) that depolymerizes crystalline and amorphous polysaccharides via the oxidation of scissile alpha- or beta-(1-4)-glycosidic bonds, yielding C1 and C4 oxidation products. Catalysis by LPMOs requires the reduction of the active-site copper from Cu(II) to Cu(I) by a reducing agent and H(2)O(2) or O(2) as a cosubstrate. In Botryotinia fuckeliana (strain B05.10) (Noble rot fungus), this protein is AA9 family lytic polysaccharide monooxygenase E.